We begin with the raw amino-acid sequence, 160 residues long: Ubiquitin-like protein 4A (160 aa).

One can recognise a Ubiquitin-like domain in the interval 1-76 (MQLTVKALQG…LNLVVKPLEK (76 aa)). A Glycyl lysine isopeptide (Lys-Gly) (interchain with G-Cter in ubiquitin) cross-link involves residue K48. The interval 99–141 (WQLIAKVLARHFSAADASRVLDQLQRDYERSLSRLTLDDIERL) is required and sufficient for interaction with BAG6.

Component of the BAG6/BAT3 complex, at least composed of BAG6, UBL4A and GET4/TRC35. Interacts with BAG6; the interaction is direct and required for UBL4A protein stability. Interacts with USP13; may be indirect via BAG6. In terms of processing, polyubiquitinated. Ubiquitination by AMFR and deubiquitination by USP13 may regulate the interaction between the BAG6/BAT complex and SGTA and therefore may regulate client proteins fate.

The protein localises to the cytoplasm. It is found in the cytosol. Its subcellular location is the nucleus. Functionally, as part of a cytosolic protein quality control complex, the BAG6/BAT3 complex, maintains misfolded and hydrophobic patches-containing proteins in a soluble state and participates in their proper delivery to the endoplasmic reticulum or alternatively can promote their sorting to the proteasome where they undergo degradation. The BAG6/BAT3 complex is involved in the post-translational delivery of tail-anchored/type II transmembrane proteins to the endoplasmic reticulum membrane. Recruited to ribosomes, it interacts with the transmembrane region of newly synthesized tail-anchored proteins and together with SGTA and ASNA1 mediates their delivery to the endoplasmic reticulum. Client proteins that cannot be properly delivered to the endoplasmic reticulum are ubiquitinated and sorted to the proteasome. Similarly, the BAG6/BAT3 complex also functions as a sorting platform for proteins of the secretory pathway that are mislocalized to the cytosol either delivering them to the proteasome for degradation or to the endoplasmic reticulum. The BAG6/BAT3 complex also plays a role in the endoplasmic reticulum-associated degradation (ERAD), a quality control mechanism that eliminates unwanted proteins of the endoplasmic reticulum through their retrotranslocation to the cytosol and their targeting to the proteasome. It maintains these retrotranslocated proteins in an unfolded yet soluble state condition in the cytosol to ensure their proper delivery to the proteasome. The chain is Ubiquitin-like protein 4A (UBL4A) from Rhinolophus ferrumequinum (Greater horseshoe bat).